The chain runs to 435 residues: Probable exopolygalacturonase X (435 aa).

The signal sequence occupies residues 1 to 22 (MRLTHVLSHTLGLLALGATAEA). Residues 31-55 (CSPKKPFRPLPTSSSRDKTCHVRSH) form a disordered region. Positions 45–55 (SRDKTCHVRSH) are enriched in basic and acidic residues. N-linked (GlcNAc...) asparagine glycosylation is found at Asn-93, Asn-112, Asn-128, and Asn-198. 2 PbH1 repeats span residues 199-229 (SSNV…DTYR) and 230-251 (SNNI…SFKP). The Proton donor role is filled by Asp-244. Cys-246 and Cys-263 are oxidised to a cystine. N-linked (GlcNAc...) asparagine glycosylation is found at Asn-252 and Asn-264. Residues 253-273 (STNILVQNLHCNGSHGISVGS) form a PbH1 3 repeat. Residue His-267 is part of the active site. 4 N-linked (GlcNAc...) asparagine glycosylation sites follow: Asn-291, Asn-296, Asn-328, and Asn-353. Residues 326–347 (VKNITYDTALIDNVDWAIEITQ) form a PbH1 4 repeat. The stretch at 361–409 (PSSLTISDVHIKNFRGTTSGSEDPYVGTIVCSSPDTCSDIYTSNINVTS) is one PbH1 5 repeat. Residues Cys-391 and Cys-397 are joined by a disulfide bond. Asn-406 and Asn-429 each carry an N-linked (GlcNAc...) asparagine glycan.

The protein belongs to the glycosyl hydrolase 28 family.

The protein localises to the secreted. The catalysed reaction is [(1-&gt;4)-alpha-D-galacturonosyl](n) + H2O = alpha-D-galacturonate + [(1-&gt;4)-alpha-D-galacturonosyl](n-1). Specific in hydrolyzing the terminal glycosidic bond of polygalacturonic acid and oligogalacturonates. The chain is Probable exopolygalacturonase X (pgaX) from Aspergillus niger (strain ATCC MYA-4892 / CBS 513.88 / FGSC A1513).